The following is a 94-amino-acid chain: Large ribosomal subunit protein eL31 (94 aa).

It belongs to the eukaryotic ribosomal protein eL31 family.

The sequence is that of Large ribosomal subunit protein eL31 (rpl31e) from Pyrococcus abyssi (strain GE5 / Orsay).